We begin with the raw amino-acid sequence, 343 residues long: E3 ubiquitin-protein ligase SP1 (343 aa).

The chain crosses the membrane as a helical span at residues 1-21 (MIPWGGVTCCLSAAALYLLGR). Residues 22–222 (SSGRDAEVLE…LISNLGKWSR (201 aa)) lie on the Chloroplast intermembrane side of the membrane. The chain crosses the membrane as a helical span at residues 223 to 244 (LYKYASMGFTVLGVFLITKHVI). Residues 245 to 343 (DSVLERRRRR…IDLAVKTYRH (99 aa)) lie on the Cytoplasmic side of the membrane. The segment at 296 to 331 (CVICLEQEYNAVFVPCGHMCCCTACSSHLTSCPLCR) adopts an RING-type zinc-finger fold.

As to quaternary structure, interacts with TOC33, TOC75-3 and TOC159. Post-translationally, auto-ubiquitinated.

It is found in the plastid. Its subcellular location is the chloroplast outer membrane. It carries out the reaction S-ubiquitinyl-[E2 ubiquitin-conjugating enzyme]-L-cysteine + [acceptor protein]-L-lysine = [E2 ubiquitin-conjugating enzyme]-L-cysteine + N(6)-ubiquitinyl-[acceptor protein]-L-lysine.. It functions in the pathway protein modification; protein ubiquitination. Its function is as follows. E3 ubiquitin-protein ligase involved in the regulation of protein import in the chloroplast. Associates with TOC complexes and mediates ubiquitination of TOC components, promoting their degradation via the ubiquitin-proteasome system (UPS). Plays a role in the reorganization of the TOC machinery. Involved in a mechanism that regulates plastid biogenesis via UPS. Promotes stress tolerance by depleting the chloroplast protein import apparatus, which limits photosystem assembly and the potential for reactive oxygen species (ROS) formation. May act as negative regulator of programmed cell death (PCD) during biotic stress. This is E3 ubiquitin-protein ligase SP1 from Arabidopsis thaliana (Mouse-ear cress).